The chain runs to 163 residues: Neurotrophin-3 (163 aa).

Positions 1-3 (IQS) are cleaved as a signal peptide. Positions 4 to 119 (TSMDQGILTE…VLNRTSRRKR (116 aa)) are excised as a propeptide. N-linked (GlcNAc...) asparagine glycosylation occurs at asparagine 112. Residues 114-133 (TSRRKREGKSHRGEYSVCDS) form a disordered region. Residues 123–133 (SHRGEYSVCDS) show a composition bias toward basic and acidic residues.

Belongs to the NGF-beta family.

The protein localises to the secreted. Functionally, seems to promote the survival of visceral and proprioceptive sensory neurons. This chain is Neurotrophin-3 (NTF3), found in Lichanura trivirgata (Rosy boa).